The chain runs to 408 residues: Imidazolonepropionase (408 aa).

Positions 73 and 75 each coordinate Fe(3+). Zn(2+) contacts are provided by H73 and H75. The 4-imidazolone-5-propanoate site is built by R82, Y145, and H178. Residue Y145 coordinates N-formimidoyl-L-glutamate. H243 lines the Fe(3+) pocket. Position 243 (H243) interacts with Zn(2+). A 4-imidazolone-5-propanoate-binding site is contributed by Q246. D318 is a binding site for Fe(3+). D318 lines the Zn(2+) pocket. Residues N320 and G322 each contribute to the N-formimidoyl-L-glutamate site. Position 323 (S323) interacts with 4-imidazolone-5-propanoate.

It belongs to the metallo-dependent hydrolases superfamily. HutI family. Zn(2+) is required as a cofactor. Fe(3+) serves as cofactor.

Its subcellular location is the cytoplasm. The catalysed reaction is 4-imidazolone-5-propanoate + H2O = N-formimidoyl-L-glutamate. It participates in amino-acid degradation; L-histidine degradation into L-glutamate; N-formimidoyl-L-glutamate from L-histidine: step 3/3. Functionally, catalyzes the hydrolytic cleavage of the carbon-nitrogen bond in imidazolone-5-propanoate to yield N-formimidoyl-L-glutamate. It is the third step in the universal histidine degradation pathway. The chain is Imidazolonepropionase from Shewanella baltica (strain OS185).